A 548-amino-acid chain; its full sequence is Uridine-cytidine kinase-like 1 (548 aa).

Residues 1 to 18 (MAAPPASMSAAPSPLQSA) are compositionally biased toward low complexity. Positions 1 to 74 (MAAPPASMSA…CKSEPPLLRT (74 aa)) are disordered. A phosphoserine mark is found at Ser56 and Ser63. 105 to 112 (GGSASGKT) contacts ATP. The residue at position 539 (Ser539) is a Phosphoserine.

The protein belongs to the uridine kinase family. Interacts with RNF19B. Ubiquitinated by RNF19B; which induces proteasomal degradation.

Its subcellular location is the cytoplasm. It localises to the nucleus. It carries out the reaction uridine + ATP = UMP + ADP + H(+). The enzyme catalyses cytidine + ATP = CMP + ADP + H(+). It participates in pyrimidine metabolism; UMP biosynthesis via salvage pathway; UMP from uridine: step 1/1. Functionally, may contribute to UTP accumulation needed for blast transformation and proliferation. This chain is Uridine-cytidine kinase-like 1 (Uckl1), found in Mus musculus (Mouse).